The sequence spans 331 residues: MKKSLIALTLAALPVAAMADVTLYGTIKAGVETSRSVEHNGGQVVSVETGTGIVDLGSKIGFKGQEDLGNGLKAIWQVEQKASIAGTDSGWGNRQSFIGLKGGFGKLRVGRLNSVLKDTGDINPWDSKSDYLGVNKIAEPEARLISVRYDSPEFAGLSGSVQYALNDNAGKYNSESYHAGFNYKNGGFFVQYGGAYKRHVRVDENVNIEKYQIHRLVSGYDNDALHASVAVQQQDAKLVEDNYSHNSQTEVAATLAYRFGNVTPRVSYAHGFKGSFDDADLSNDYDQVVVGAEYDFSKRTSALVSAGWLQEGKGENKFVSTAGGVGLRHKF.

The first 19 residues, 1–19 (MKKSLIALTLAALPVAAMA), serve as a signal peptide directing secretion.

It belongs to the Gram-negative porin family. Homotrimer.

The protein resides in the cell outer membrane. Functionally, serves as a slightly cation selective porin. The polypeptide is Major outer membrane protein P.IB (porB) (Neisseria meningitidis serogroup B).